The sequence spans 492 residues: Probable endopolygalacturonase D (492 aa).

The signal sequence occupies residues 1–16; it reads MKRSALILSFLPLVFG. An intrachain disulfide couples cysteine 151 to cysteine 166. 4 PbH1 repeats span residues 216–238, 258–280, 281–319, and 320–341; these read GTSVTITGVEGHVIDGNGAAYWD, MYNSRIENLYIQNWPVHCFEIES, TEHLTVSGLTLNNSAGDAANSKSDGDPAAHNSDGFDIKE, and SSYFTLENTWVHNQDDCVAVTS. An N-linked (GlcNAc...) asparagine glycan is attached at asparagine 292. Catalysis depends on aspartate 334, which acts as the Proton donor. Cysteine 336 and cysteine 352 are joined by a disulfide. The active site involves histidine 356. PbH1 repeat units lie at residues 371–392, 400–422, and 434–478; these read VNGVTFSNSQVISSQNGCRIKT, VYNIRYENITLSDISDYGIDVQQ, and TNGV…SITG. Residues asparagine 407 and asparagine 441 are each glycosylated (N-linked (GlcNAc...) asparagine). 2 disulfide bridges follow: cysteine 461–cysteine 466 and cysteine 484–cysteine 491.

The protein belongs to the glycosyl hydrolase 28 family.

The protein localises to the secreted. The catalysed reaction is (1,4-alpha-D-galacturonosyl)n+m + H2O = (1,4-alpha-D-galacturonosyl)n + (1,4-alpha-D-galacturonosyl)m.. Involved in maceration and soft-rotting of plant tissue. Hydrolyzes the 1,4-alpha glycosidic bonds of de-esterified pectate in the smooth region of the plant cell wall. This is Probable endopolygalacturonase D (pgaD) from Aspergillus oryzae (strain ATCC 42149 / RIB 40) (Yellow koji mold).